Consider the following 1443-residue polypeptide: Sterol 3-beta-glucosyltransferase ATG26 (1443 aa).

Residues 1 to 13 (MATQADDAAASQA) are compositionally biased toward low complexity. 2 disordered regions span residues 1–69 (MATQ…MFMN) and 88–187 (NDRF…LTLT). The segment covering 18–32 (GDLKEHVHDELDKIQ) has biased composition (basic and acidic residues). A compositionally biased stretch (acidic residues) spans 49–58 (DSEDSDDEDN). Positions 104-117 (QNTRTESIARTSIL) are enriched in polar residues. A compositionally biased stretch (basic residues) spans 125–134 (DKVHRRRKLS). Over residues 164-173 (EVADEADDEH) the composition is skewed to acidic residues. The 45-residue stretch at 240–284 (LKEIFEFDEYEQVIEEYPCWLLQSVLLQGYMYITSKHICFYAYLP) folds into the GRAM 1 domain. Residues 289–385 (EAVKSGYLSK…WVKSLQRVIF (97 aa)) form the PH domain. The disordered stretch occupies residues 463 to 657 (EQVITGDDHD…HGDRHHGIPH (195 aa)). Residues 506–525 (LAPMSPLSPRSPSQLSPRAS) show a composition bias toward low complexity. Residues 585 to 614 (SFLQSSIENPSISTLSPSSYDEPSASQILQ) show a composition bias toward polar residues. Positions 631–642 (SRKRDRSGKRTP) are enriched in basic residues. The 106-residue stretch at 765–870 (RFRAHFALPE…DCAVTLHQLM (106 aa)) folds into the GRAM 2 domain. A coiled-coil region spans residues 883 to 910 (DQEEQDDEEAAAAMAERDELQEARQDEF). The UDP-alpha-D-glucose site is built by S957, R958, D960, A1265, H1267, H1280, S1283, G1284, T1285, D1304, and Q1305. A disordered region spans residues 1385–1443 (NAEHGLAEDDDDTEESWTFVGRDEPDPDAVTKKLSDGLAGLGAAGDRPPPLGSQAPTVA). Over residues 1405–1419 (GRDEPDPDAVTKKLS) the composition is skewed to basic and acidic residues.

The protein belongs to the glycosyltransferase 28 family.

It is found in the cytoplasm. Its subcellular location is the preautophagosomal structure membrane. The enzyme catalyses a sterol + UDP-alpha-D-glucose = a sterol 3-beta-D-glucoside + UDP + H(+). It carries out the reaction ergosterol + UDP-alpha-D-glucose = ergosteryl 3-beta-D-glucoside + UDP + H(+). Functionally, sterol glycosyltransferase responsible for the glycosylation of ergosterol to form ergosterol-glucoside. The protein is Sterol 3-beta-glucosyltransferase ATG26 of Gibberella zeae (strain ATCC MYA-4620 / CBS 123657 / FGSC 9075 / NRRL 31084 / PH-1) (Wheat head blight fungus).